We begin with the raw amino-acid sequence, 275 residues long: uncharacterized protein (275 aa).

An ABC transmembrane type-1 domain is found at 1–162 (NLFSVIVSLI…ITSYWTEVQR (162 aa)). Transmembrane regions (helical) follow at residues 21–41 (LYLV…GNIM), 106–126 (IMNL…YYLM), and 137–157 (FAYV…TSYW).

The protein localises to the cell membrane. This is an uncharacterized protein from Staphylococcus epidermidis.